The following is a 173-amino-acid chain: dCTP deaminase, dUMP-forming (173 aa).

Residues 93–98 (RSSTGR), Asp111, 119–121 (TLE), Gln138, and Tyr151 contribute to the dCTP site. The active-site Proton donor/acceptor is the Glu121.

Belongs to the dCTP deaminase family. As to quaternary structure, homotrimer.

The enzyme catalyses dCTP + 2 H2O = dUMP + NH4(+) + diphosphate. It functions in the pathway pyrimidine metabolism; dUMP biosynthesis; dUMP from dCTP: step 1/1. Its function is as follows. Bifunctional enzyme that catalyzes both the deamination of dCTP to dUTP and the hydrolysis of dUTP to dUMP without releasing the toxic dUTP intermediate. In Clostridium botulinum (strain Eklund 17B / Type B), this protein is dCTP deaminase, dUMP-forming.